Here is a 103-residue protein sequence, read N- to C-terminus: Large ribosomal subunit protein bL21 (103 aa).

It belongs to the bacterial ribosomal protein bL21 family. In terms of assembly, part of the 50S ribosomal subunit. Contacts protein L20.

Its function is as follows. This protein binds to 23S rRNA in the presence of protein L20. The protein is Large ribosomal subunit protein bL21 of Shigella sonnei (strain Ss046).